We begin with the raw amino-acid sequence, 144 residues long: Ferredoxin-thioredoxin reductase catalytic chain, chloroplastic (144 aa).

The N-terminal 31 residues, 1–31 (MKALQASIAYSFPISSPAASPRRFSRVIRAQ), are a transit peptide targeting the chloroplast. C83 is a binding site for [4Fe-4S] cluster. C85 functions as the Nucleophile in the catalytic mechanism. The cysteines at positions 85 and 115 are disulfide-linked. C102, C104, and C113 together coordinate [4Fe-4S] cluster.

The protein belongs to the ferredoxin thioredoxin reductase beta subunit family. Heterodimer of subunit A (variable subunit) and subunit B (catalytic subunit). Heterodimeric FTR forms a complex with ferredoxin and thioredoxin. Requires [4Fe-4S] cluster as cofactor.

The protein resides in the plastid. It localises to the chloroplast. The catalysed reaction is [thioredoxin]-disulfide + 2 reduced [2Fe-2S]-[ferredoxin] + 2 H(+) = [thioredoxin]-dithiol + 2 oxidized [2Fe-2S]-[ferredoxin]. In terms of biological role, catalytic subunit of the ferredoxin-thioredoxin reductase (FTR), which catalyzes the two-electron reduction of thioredoxins by the electrons provided by reduced ferredoxin. This chain is Ferredoxin-thioredoxin reductase catalytic chain, chloroplastic (FTRC), found in Spinacia oleracea (Spinach).